A 488-amino-acid chain; its full sequence is Proline--tRNA ligase (488 aa).

It belongs to the class-II aminoacyl-tRNA synthetase family. ProS type 3 subfamily. In terms of assembly, homodimer.

The protein localises to the cytoplasm. The enzyme catalyses tRNA(Pro) + L-proline + ATP = L-prolyl-tRNA(Pro) + AMP + diphosphate. Its function is as follows. Catalyzes the attachment of proline to tRNA(Pro) in a two-step reaction: proline is first activated by ATP to form Pro-AMP and then transferred to the acceptor end of tRNA(Pro). In Borreliella afzelii (strain PKo) (Borrelia afzelii), this protein is Proline--tRNA ligase.